Here is a 1734-residue protein sequence, read N- to C-terminus: Gag-Pol polyprotein (1734 aa).

Gly-2 carries N-myristoyl glycine; by host lipidation. The tract at residues 107–217 is disordered; that stretch reads PSPTAPILPS…STTSRAFPLR (111 aa). Positions 109-112 match the PTAP/PSAP motif motif; it reads PTAP. An LYPX(n)L motif motif is present at residues 128 to 132; the sequence is LYPAL. The short motif at 161 to 164 is the PPXY motif element; that stretch reads PPPY. Ser-191 carries the phosphoserine; by host modification. Residues 344–392 form an interaction with host PIAS4 region; that stretch reads GRSPTNLAKVKGITQGPNESPSAFLERLKEAYRRYTPYDPEDPGQETNV. The interval 429–434 is interaction with host UBE2I; the sequence is IFNKRE. Basic and acidic residues-rich tracts occupy residues 434-465 and 485-498; these read ETPEEREERVRRETEEKEERRRAEEEQKEKER and RQDRQGGERRRPQL. Disordered regions lie at residues 434–498 and 512–552; these read ETPE…RPQL and WAKD…PRIT. The stretch at 437-478 forms a coiled coil; the sequence is EEREERVRRETEEKEERRRAEEEQKEKERDRRRHREMSKLLA. The segment at 501–518 adopts a CCHC-type zinc-finger fold; the sequence is DQCAYCKEKGHWAKDCPK. The 71-residue stretch at 560-630 folds into the Peptidase A2 domain; that stretch reads VTFLVDTGAQ…CPYPLLGRDL (71 aa). The active-site Protease; shared with dimeric partner is the Asp-565. In terms of domain architecture, Reverse transcriptase spans 740-931; that stretch reads LDQGILVPCQ…KQVKYLGYLL (192 aa). Mg(2+) contacts are provided by Asp-808, Asp-882, Asp-883, Asp-1182, Glu-1220, Asp-1241, and Asp-1311. The RNase H type-1 domain maps to 1173–1319; the sequence is PDADHTWYTD…ADQAAREAAI (147 aa). Residues 1386 to 1426 form an HHCC-type zinc finger; sequence HRLTHLGYQKMKALLDRGESPYYMLNRDKTLQYVADSCTVC. An Integrase catalytic domain is found at 1443-1601; sequence RGHRPGSHWE…TPYEILYGAP (159 aa). Asp-1454 and Asp-1513 together coordinate Mg(2+).

The protein belongs to the retroviral Pol polyprotein family. As to quaternary structure, homohexamer; further associates as homomultimer. The virus core is composed of a lattice formed from hexagonal rings, each containing six capsid monomers. In terms of assembly, interacts (via PPXY motif) with host NEDD4. Interacts (via PSAP motif) with host TSG101. Interacts (via LYPX(n)L motif) with host PDCD6IP. The reverse transcriptase is a monomer (Potential). Interacts (via RNase domains) with host release factor ETF1; this interaction is essential for translational readthrough of amber codon between viral gag and pol genes, as well as for viral replication. As to quaternary structure, homodimer. Mg(2+) serves as cofactor. Ubiquitinated by ITCH. Gag can recruit the ubiquitin ligase Itch in an L domain-independent manner to facilitate virus release via a mechanism that involves Gag ubiquitination. In terms of processing, specific enzymatic cleavages by the viral protease yield mature proteins. The protease is released by autocatalytic cleavage. The polyprotein is cleaved during and after budding, this process is termed maturation. Post-translationally, sumoylated; which is required for virus replication. Phosphorylated on serine residues.

It is found in the virion. Its subcellular location is the host cell membrane. It localises to the host late endosome membrane. The protein resides in the host endosome. The protein localises to the host multivesicular body. It is found in the host cytoplasm. The catalysed reaction is DNA(n) + a 2'-deoxyribonucleoside 5'-triphosphate = DNA(n+1) + diphosphate. It catalyses the reaction Endonucleolytic cleavage to 5'-phosphomonoester.. Its activity is regulated as follows. Most efficiently inhibited by Amprenavir, which is able to block Gag-Pol processing in infected cells. Functionally, plays a role in budding and is processed by the viral protease during virion maturation outside the cell. During budding, it recruits, in a PPXY-dependent or independent manner, Nedd4-like ubiquitin ligases that conjugate ubiquitin molecules to Gag-Pol, or to Gag-Pol binding host factors. Interaction with HECT ubiquitin ligases probably link the viral protein to the host ESCRT pathway and facilitates release. In terms of biological role, targets Gag and gag-pol polyproteins to the plasma membrane via a multipartite membrane binding signal, that includes its myristoylated N-terminus. Also mediates nuclear localization of the pre-integration complex. Constituent of the pre-integration complex (PIC) which tethers the latter to mitotic chromosomes. This allows the integration of the viral genome into the host DNA. Its function is as follows. Forms the spherical core of the virion that encapsulates the genomic RNA-nucleocapsid complex. Functionally, involved in the packaging and encapsidation of two copies of the genome. Binds with high affinity to conserved UCUG elements within the packaging signal, located near the 5'-end of the genome. This binding is dependent on genome dimerization. Acts as a nucleic acid chaperone which is involved in rearrangement of nucleic acid secondary structures during gRNA retrotranscription. In terms of biological role, the aspartyl protease mediates proteolytic cleavages of Gag and Gag-Pol polyproteins during or shortly after the release of the virion from the plasma membrane. Cleavages take place as an ordered, step-wise cascade to yield mature proteins. This process is called maturation. Displays maximal activity during the budding process just prior to particle release from the cell (Potential). Cleaves the translation initiation factor eIF4G leading to the inhibition of host cap-dependent translation. RT is a multifunctional enzyme that converts the viral dimeric RNA genome into dsDNA in the cytoplasm, shortly after virus entry into the cell. This enzyme displays a DNA polymerase activity that can copy either DNA or RNA templates, and a ribonuclease H (RNase H) activity that cleaves the RNA strand of RNA-DNA heteroduplexes in a partially processive 3' to 5' endonucleasic mode. Conversion of viral genomic RNA into dsDNA requires many steps. A tRNA binds to the primer-binding site (PBS) situated at the 5' end of the viral RNA. RT uses the 3' end of the tRNA primer to perform a short round of RNA-dependent minus-strand DNA synthesis. The reading proceeds through the U5 region and ends after the repeated (R) region which is present at both ends of viral RNA. The portion of the RNA-DNA heteroduplex is digested by the RNase H, resulting in a ssDNA product attached to the tRNA primer. This ssDNA/tRNA hybridizes with the identical R region situated at the 3' end of viral RNA. This template exchange, known as minus-strand DNA strong stop transfer, can be either intra- or intermolecular. RT uses the 3' end of this newly synthesized short ssDNA to perform the RNA-dependent minus-strand DNA synthesis of the whole template. RNase H digests the RNA template except for a polypurine tract (PPT) situated at the 5' end of the genome. It is not clear if both polymerase and RNase H activities are simultaneous. RNase H probably can proceed both in a polymerase-dependent (RNA cut into small fragments by the same RT performing DNA synthesis) and a polymerase-independent mode (cleavage of remaining RNA fragments by free RTs). Secondly, RT performs DNA-directed plus-strand DNA synthesis using the PPT that has not been removed by RNase H as primers. PPT and tRNA primers are then removed by RNase H. The 3' and 5' ssDNA PBS regions hybridize to form a circular dsDNA intermediate. Strand displacement synthesis by RT to the PBS and PPT ends produces a blunt ended, linear dsDNA copy of the viral genome that includes long terminal repeats (LTRs) at both ends. Its function is as follows. Catalyzes viral DNA integration into the host chromosome, by performing a series of DNA cutting and joining reactions. This enzyme activity takes place after virion entry into a cell and reverse transcription of the RNA genome in dsDNA. The first step in the integration process is 3' processing. This step requires a complex comprising the viral genome, matrix protein and integrase. This complex is called the pre-integration complex (PIC). The integrase protein removes 2 nucleotides from each 3' end of the viral DNA, leaving recessed CA OH's at the 3' ends. In the second step that requires cell division, the PIC enters cell nucleus. In the third step, termed strand transfer, the integrase protein joins the previously processed 3' ends to the 5' ends of strands of target cellular DNA at the site of integration. The last step is viral DNA integration into host chromosome. The sequence is that of Gag-Pol polyprotein (pol) from AKV murine leukemia virus (AKR (endogenous) murine leukemia virus).